The primary structure comprises 652 residues: MAEAPQVVETDPDFEPLPRQRSCTWPLPRPEFNQSNSTTSSPAPSGGAAANPDAAASLASASAVSTDFMSNLSLLEESEDFARAPGCVAVAAAAAASRGLCGDFQGPEAGCVHPAPPQPPPTGPLSQPPPVPPSAAAAAGPLAGQPRKTSSSRRNAWGNLSYADLITKAIESSAEKRLTLSQIYEWMVKSVPYFKDKGDSNSSAGWKNSIRHNLSLHSKFIRVQNEGTGKSSWWMLNPEGGKSGKSPRRRAASMDNNSKFAKSRGRAAKKKASLQSGQEGPGDSPGSQFSKWPASPGSHSNDDFDNWSTFRPRTSSNASTISGRLSPIMTEQDDLGDGDVHSLVYPPSAAKMASTLPSLSEISNPENMENLLDNLNLLSSPTSLTVSTQSSPGSMMQQTPCYSFAPPNTSLNSPSPNYSKYTYGQSSMSPLPQMPMQTLQDSKSSYGGLNQYNCAPGLLKELLTSDSPPHNDIMSPVDPGVAQPNSRVLGQNVMMGPNSVMPAYGSQASHNKMMNPSSHTHPGHAQQTASVNGRTLPHVVNTMPHTSAMNRLTPVKTPLQVPLSHPMQMSALGSYSSVSSCNGYGRMGVLHQEKLPSDLDGMFIERLDCDMESIIRNDLMDGDTLDFNFDNVLPNQSFPHSVKTTTHSWVSG.

2 disordered regions span residues 1 to 62 (MAEA…ASAS) and 112 to 154 (VHPA…SSRR). Thr24 is modified (phosphothreonine; by PKB/AKT1 or PKB/AKT2 and SGK1). Residues 35–62 (SNSTTSSPAPSGGAAANPDAAASLASAS) show a composition bias toward low complexity. Residues 114 to 133 (PAPPQPPPTGPLSQPPPVPP) show a composition bias toward pro residues. A compositionally biased stretch (low complexity) spans 134–146 (SAAAAAGPLAGQP). The fork-head DNA-binding region spans 156 to 232 (AWGNLSYADL…VQNEGTGKSS (77 aa)). 2 DNA-binding regions span residues 208–215 (NSIRHNLS) and 231–234 (SSWW). Residue Ser209 is modified to Phosphoserine; by STK4/MST1. Phosphoserine is present on residues Ser215, Ser231, and Ser232. 2 disordered regions span residues 231-342 (SSWW…DVHS) and 383-410 (SLTV…PNTS). Lys242 and Lys245 each carry N6-acetyllysine. Ser246 carries the post-translational modification Phosphoserine; by CDK1. 2 positions are modified to omega-N-methylarginine; by PRMT1: Arg248 and Arg250. The Nuclear localization signal motif lies at 248–250 (RRR). Phosphoserine; by PKB/AKT1 and SGK1 is present on Ser253. 3 positions are modified to N6-acetyllysine: Lys259, Lys262, and Lys271. The span at 261 to 272 (AKSRGRAAKKKA) shows a compositional bias: basic residues. Residues 280 to 562 (GPGDSPGSQF…TPVKTPLQVP (283 aa)) are sufficient for interaction with NLK. Phosphoserine is present on residues Ser284 and Ser295. The segment covering 306 to 323 (NWSTFRPRTSSNASTISG) has biased composition (polar residues). The residue at position 316 (Ser316) is a Phosphoserine; by PKB/AKT1 or PKB/AKT2. Ser319 is modified (phosphoserine; by CK1 and SGK1). The residue at position 322 (Ser322) is a Phosphoserine; by CK1. The residue at position 326 (Ser326) is a Phosphoserine. Position 330 is a phosphothreonine (Thr330). The tract at residues 360–456 (SEISNPENME…GGLNQYNCAP (97 aa)) is required for interaction with RUNX2. A compositionally biased stretch (polar residues) spans 392–401 (PGSMMQQTPC). Lys420 bears the N6-acetyllysine mark. Residues 459–463 (LKELL) carry the Required for interaction with SIRT1 motif.

As to quaternary structure, interacts with EP300 and CREBBP; the interactions acetylate FOXO1. Interacts with the 14-3-3 proteins, YWHAG and YWHAZ; the interactions require insulin-stimulated phosphorylation on Thr-24, promote nuclear exit and loss of transcriptional activity. Interacts with SKP2; the interaction ubiquitinates FOXO1 leading to its proteasomal degradation. Interacts with PMRT1; methylates FOXO1, prevents PKB/AKT1 phosphorylation and retains FOXO1 in the nucleus. Interacts (via an N-terminal domain) with FCOR; the interaction is direct, occurs in a forskolin-independent manner and prevents SIRT1 binding to FOXO1. Interacts (via the C-terminal half) with ATF4 (via its DNA-binding domain); the interaction occurs in osteoblasts, regulates glucose homeostasis via suppression of beta-cell proliferation and subsequent decrease in insulin production. Interacts with RUNX2; the interaction inhibits RUNX2 transcriptional activity and mediates the IGF1/insulin-dependent BGLAP expression in osteoblasts. Interacts with PPP2R1A; the interaction regulates the dephosphorylation of FOXO1 at Thr-24 and Ser-253 leading to its nuclear import. Binds to CDK1. Interacts with LRPPRC. Interacts with RUNX2; the interaction inhibits RUNX2 transcriptional activity and mediates the IGF1/insulin-dependent BGLAP expression in osteoblasts. Interacts with NLK. Interacts with SIRT1; the interaction results in the deacetylation of FOXO1 leading to activation of FOXO1-mediated transcription of genes involved in DNA repair and stress resistance. The interaction requires the presence of KRIT1 and is inhibited by FCOR. Interacts with SIRT2; the interaction is disrupted in response to oxidative stress or serum deprivation, leading to increased level of acetylated FOXO1, which promotes stress-induced autophagy by stimulating E1-like activating enzyme ATG7. Interacts (acetylated form) with ATG7; the interaction is increased in response to oxidative stress or serum deprivation and promotes the autophagic process leading to cell death. Interacts (acetylated form) with PPARG. Interacts with XBP1 isoform 2; this interaction is direct and leads to FOXO1 ubiquitination and degradation via the proteasome pathway. Interacts (via the Fork-head domain) with CEBPA; the interaction increases when FOXO1 is deacetylated. Interacts with WDFY2. Forms a complex with WDFY2 and AKT1. Interacts with CRY1. Interacts with PPIA/CYPA; the interaction promotes FOXO1 dephosphorylation, nuclear accumulation and transcriptional activity. Interacts with TOX4; FOXO1 is required for full induction of TOX4-dependent activity and the interaction is inhibited by insulin. Interacts (when phosphorylated on Ser-253) with STUB1/CHIP. In terms of processing, phosphorylation by NLK promotes nuclear export and inhibits the transcriptional activity. In response to growth factors, phosphorylation on Thr-24, Ser-253 and Ser-319 by PKB/AKT1 promotes nuclear export and inactivation of transactivational activity. Phosphorylation on Thr-24 is required for binding 14-3-3 proteins. Phosphorylation of Ser-253 decreases DNA-binding activity and promotes the phosphorylation of Thr-24 and Ser-316, permitting phosphorylation of Ser-319 and Ser-322, probably by CDK1, leading to nuclear exclusion and loss of function. Stress signals, such as response to oxygen or nitric oxide, attenuate the PKB/AKT1-mediated phosphorylation leading to nuclear retention. Phosphorylation of Ser-326 is independent of IGF1 and leads to reduced function. Dephosphorylated on Thr-24 and Ser-253 by PP2A in beta-cells under oxidative stress leading to nuclear retention. Phosphorylation of Ser-246 by CDK1 disrupts binding of 14-3-3 proteins leading to nuclear accumulation and has no effect on DNA-binding nor transcriptional activity. Phosphorylation by STK4/MST1 on Ser-209, upon oxidative stress, inhibits binding to 14-3-3 proteins and nuclear export. PPIA/CYPA promotes its dephosphorylation on Ser-253. Ubiquitinated by SKP2. Ubiquitinated, leading to proteasomal degradation. Ubiquitinated by STUB1/CHIP; when Ser-253 is phosphorylated. Post-translationally, methylation inhibits PKB/AKT1-mediated phosphorylation at Ser-253, promoting nuclear retention and increasing the transcriptional activity and cell death. Methylation increased by oxidative stress. In terms of processing, acetylation at Lys-259 and Lys-271 are necessary for autophagic cell death induction. Deacetylated by SIRT2 in response to oxidative stress or serum deprivation, thereby negatively regulating FOXO1-mediated autophagic cell death. Once in the nucleus, acetylated by CREBBP/EP300. Acetylation diminishes the interaction with target DNA and attenuates the transcriptional activity. It increases the phosphorylation at Ser-253, and is required for the transcriptional inhibition by FCOR. Deacetylation by SIRT1 results in reactivation of the transcriptional activity. Acetylation of FOXO1 diminishes its binding to PPARG in adipocytes. Deacetylated by SIRT2; deacetylation of FOXO1 directly increases its repressive binding to PPARG and inhibits adipocyte differentiation. Oxidative stress by hydrogen peroxide treatment appears to promote deacetylation and uncoupling of insulin-induced phosphorylation. By contrast, resveratrol acts independently of acetylation. Acetylated at Lys-420, promoting its localization to the nucleus and transcription factor activity. Deacetylation at Lys-420 by SIRT6, promotes its translocation into the cytoplasm, preventing its transcription factor activity. Deacetylation and subsequent inhibition by SIRT6 has different effects depending on cell types: it inhibits gluconeogenesis in hepatocytes, promotes glucose sensing in pancreatic beta-cells and regulates lipid catabolism in brown adipocytes. As to expression, expressed in liver, white and brown adipose tissues (at protein level).

The protein resides in the cytoplasm. Its subcellular location is the nucleus. Functionally, transcription factor that is the main target of insulin signaling and regulates metabolic homeostasis in response to oxidative stress. Binds to the insulin response element (IRE) with consensus sequence 5'-TT[G/A]TTTTG-3' and the related Daf-16 family binding element (DBE) with consensus sequence 5'-TT[G/A]TTTAC-3'. Activity suppressed by insulin. Main regulator of redox balance and osteoblast numbers and controls bone mass. Orchestrates the endocrine function of the skeleton in regulating glucose metabolism. Also acts as a key regulator of chondrogenic commitment of skeletal progenitor cells in response to lipid availability: when lipids levels are low, translocates to the nucleus and promotes expression of SOX9, which induces chondrogenic commitment and suppresses fatty acid oxidation. Acts synergistically with ATF4 to suppress osteocalcin/BGLAP activity, increasing glucose levels and triggering glucose intolerance and insulin insensitivity. Also suppresses the transcriptional activity of RUNX2, an upstream activator of osteocalcin/BGLAP. Acts as an inhibitor of glucose sensing in pancreatic beta cells by acting as a transcription repressor and suppressing expression of PDX1. In hepatocytes, promotes gluconeogenesis by acting together with PPARGC1A and CEBPA to activate the expression of genes such as IGFBP1, G6PC1 and PCK1. Also promotes gluconeogenesis by directly promoting expression of PPARGC1A and G6PC1. Important regulator of cell death acting downstream of CDK1, PKB/AKT1 and STK4/MST1. Promotes neural cell death. Mediates insulin action on adipose tissue. Regulates the expression of adipogenic genes such as PPARG during preadipocyte differentiation and, adipocyte size and adipose tissue-specific gene expression in response to excessive calorie intake. Regulates the transcriptional activity of GADD45A and repair of nitric oxide-damaged DNA in beta-cells. Required for the autophagic cell death induction in response to starvation or oxidative stress in a transcription-independent manner. Mediates the function of MLIP in cardiomyocytes hypertrophy and cardiac remodeling. Positive regulator of apoptosis in cardiac smooth muscle cells as a result of its transcriptional activation of pro-apoptotic genes. Regulates endothelial cell (EC) viability and apoptosis in a PPIA/CYPA-dependent manner via transcription of CCL2 and BCL2L11 which are involved in EC chemotaxis and apoptosis. In Mus musculus (Mouse), this protein is Forkhead box protein O1 (Foxo1).